Consider the following 274-residue polypeptide: Phosphatidylglycerol--prolipoprotein diacylglyceryl transferase (274 aa).

The next 4 membrane-spanning stretches (helical) occupy residues 16–36 (VGLH…LSSF), 62–82 (FALG…VLFY), 94–114 (IIKI…LVIW), and 129–149 (LSVT…ALLI). Arg-150 contributes to the a 1,2-diacyl-sn-glycero-3-phospho-(1'-sn-glycerol) binding site. 3 helical membrane-spanning segments follow: residues 184–204 (VQLY…WLCY), 213–233 (GYSA…AEFF), and 247–267 (LTIG…ILWI).

It belongs to the Lgt family.

Its subcellular location is the cell inner membrane. The enzyme catalyses L-cysteinyl-[prolipoprotein] + a 1,2-diacyl-sn-glycero-3-phospho-(1'-sn-glycerol) = an S-1,2-diacyl-sn-glyceryl-L-cysteinyl-[prolipoprotein] + sn-glycerol 1-phosphate + H(+). It functions in the pathway protein modification; lipoprotein biosynthesis (diacylglyceryl transfer). Catalyzes the transfer of the diacylglyceryl group from phosphatidylglycerol to the sulfhydryl group of the N-terminal cysteine of a prolipoprotein, the first step in the formation of mature lipoproteins. The sequence is that of Phosphatidylglycerol--prolipoprotein diacylglyceryl transferase from Chlamydia muridarum (strain MoPn / Nigg).